The following is a 388-amino-acid chain: Coproporphyrin III ferrochelatase (388 aa).

Positions 59 and 124 each coordinate Fe-coproporphyrin III. Fe(2+)-binding residues include H186 and E276. Residues 349–369 (QSPQHASRAVTDAAATGRRGD) are disordered.

Belongs to the ferrochelatase family.

The protein localises to the cytoplasm. The enzyme catalyses Fe-coproporphyrin III + 2 H(+) = coproporphyrin III + Fe(2+). It participates in porphyrin-containing compound metabolism; protoheme biosynthesis. Functionally, involved in coproporphyrin-dependent heme b biosynthesis. Catalyzes the insertion of ferrous iron into coproporphyrin III to form Fe-coproporphyrin III. The protein is Coproporphyrin III ferrochelatase of Frankia alni (strain DSM 45986 / CECT 9034 / ACN14a).